We begin with the raw amino-acid sequence, 299 residues long: MDATFPSQHNITARPAPGRIRREQCKLAKRLRRQVGQAIADFGMIEANDKIMVCLSGGKDSYTLLDMLLQLRAKAPVPFELTAVNLDQKQPGFPKHVLPEYLSSIGVPYHIIEQDTYSVVTRVVPEGKTLCALCSRMRRGALYAYAETQGFTKIALGHHRDDMVATFFMNLFHHAKLSGMPPKLRSDNGKHVVIRPLAYVSETDIIAYADAREFPIIPCNLCGSQENLQRKQVGVMLKAWEKEYPGRIEQIARALGNIRPSQLADQSLFDFLALGRHSNTPLPNAHAWLAGDLANDTAP.

Positions 56–61 (SGGKDS) match the PP-loop motif motif. Residues Cys-131, Cys-134, and Cys-222 each contribute to the [4Fe-4S] cluster site.

It belongs to the TtcA family. Homodimer. Mg(2+) serves as cofactor. The cofactor is [4Fe-4S] cluster.

Its subcellular location is the cytoplasm. The enzyme catalyses cytidine(32) in tRNA + S-sulfanyl-L-cysteinyl-[cysteine desulfurase] + AH2 + ATP = 2-thiocytidine(32) in tRNA + L-cysteinyl-[cysteine desulfurase] + A + AMP + diphosphate + H(+). Its pathway is tRNA modification. Catalyzes the ATP-dependent 2-thiolation of cytidine in position 32 of tRNA, to form 2-thiocytidine (s(2)C32). The sulfur atoms are provided by the cysteine/cysteine desulfurase (IscS) system. The sequence is that of tRNA-cytidine(32) 2-sulfurtransferase from Xylella fastidiosa (strain M23).